The following is a 280-amino-acid chain: Nucleotide-binding protein CV_3336 (280 aa).

8 to 15 serves as a coordination point for ATP; sequence GLSGSGKS. 57–60 provides a ligand contact to GTP; the sequence is DTRS.

This sequence belongs to the RapZ-like family.

Its function is as follows. Displays ATPase and GTPase activities. This is Nucleotide-binding protein CV_3336 from Chromobacterium violaceum (strain ATCC 12472 / DSM 30191 / JCM 1249 / CCUG 213 / NBRC 12614 / NCIMB 9131 / NCTC 9757 / MK).